A 156-amino-acid chain; its full sequence is Transcription inhibitor protein Gfh1 (156 aa).

The stretch at 1–74 forms a coiled coil; sequence MAREVKLTKA…LEDILSRAVI (74 aa).

This sequence belongs to the GreA/GreB family. Interacts with RNAP.

In terms of biological role, inhibits all catalytic activities of RNA polymerase (RNAP) by partially occluding its substrate-binding site and preventing NTP binding. The chain is Transcription inhibitor protein Gfh1 (gfh1) from Thermus thermophilus (strain ATCC BAA-163 / DSM 7039 / HB27).